Here is a 400-residue protein sequence, read N- to C-terminus: Na(+)/H(+) antiporter NhaA (400 aa).

Helical transmembrane passes span 10–30, 60–80, 95–115, 126–146, 155–175, 178–198, 218–238, 265–285, 295–315, 334–354, and 364–384; these read FNLEASGGIVLALAAIAAMII, AHHWINDGLMAVFFFLVGLEL, IILPAGAALGGMVMPAIVYLF, GWAIPTATDIAFALGILSLLG, VFLVSIAIFDDIGAIIIIALF, NDLSLGSLAIAGLCLPFLYML, IAVLKSGIHATLAGVVLALFI, GILPLFAFANAGISLKGAGFG, IAAGLFIGKQVGVMLMCWLIF, AALLCGVGFTMSLFIGGLAFA, and LGIIMGSIVSGIAGYMMLKTT.

Belongs to the NhaA Na(+)/H(+) (TC 2.A.33) antiporter family.

It localises to the cell inner membrane. It catalyses the reaction Na(+)(in) + 2 H(+)(out) = Na(+)(out) + 2 H(+)(in). In terms of biological role, na(+)/H(+) antiporter that extrudes sodium in exchange for external protons. The protein is Na(+)/H(+) antiporter NhaA of Psychrobacter arcticus (strain DSM 17307 / VKM B-2377 / 273-4).